A 734-amino-acid polypeptide reads, in one-letter code: Photosystem I P700 chlorophyll a apoprotein A2 (734 aa).

8 helical membrane passes run isoleucine 46–alanine 69, leucine 135–glutamine 158, leucine 175–isoleucine 199, isoleucine 273–tyrosine 291, leucine 330–tyrosine 353, alanine 369–valine 395, alanine 417–histidine 439, and phenylalanine 517–valine 535. [4Fe-4S] cluster-binding residues include cysteine 559 and cysteine 568. The next 2 membrane-spanning stretches (helical) occupy residues alanine 575–tryptophan 596 and leucine 643–isoleucine 665. 3 residues coordinate chlorophyll a: histidine 654, methionine 662, and tyrosine 670. Position 671 (tryptophan 671) interacts with phylloquinone. A helical transmembrane segment spans residues leucine 707–alanine 727.

Belongs to the PsaA/PsaB family. As to quaternary structure, the PsaA/B heterodimer binds the P700 chlorophyll special pair and subsequent electron acceptors. PSI consists of a core antenna complex that captures photons, and an electron transfer chain that converts photonic excitation into a charge separation. The eukaryotic PSI reaction center is composed of at least 11 subunits. P700 is a chlorophyll a/chlorophyll a' dimer, A0 is one or more chlorophyll a, A1 is one or both phylloquinones and FX is a shared 4Fe-4S iron-sulfur center. serves as cofactor.

It is found in the plastid. The protein localises to the chloroplast thylakoid membrane. The catalysed reaction is reduced [plastocyanin] + hnu + oxidized [2Fe-2S]-[ferredoxin] = oxidized [plastocyanin] + reduced [2Fe-2S]-[ferredoxin]. Its function is as follows. PsaA and PsaB bind P700, the primary electron donor of photosystem I (PSI), as well as the electron acceptors A0, A1 and FX. PSI is a plastocyanin/cytochrome c6-ferredoxin oxidoreductase, converting photonic excitation into a charge separation, which transfers an electron from the donor P700 chlorophyll pair to the spectroscopically characterized acceptors A0, A1, FX, FA and FB in turn. Oxidized P700 is reduced on the lumenal side of the thylakoid membrane by plastocyanin or cytochrome c6. The sequence is that of Photosystem I P700 chlorophyll a apoprotein A2 from Guillardia theta (Cryptophyte).